We begin with the raw amino-acid sequence, 337 residues long: Lipoyl synthase (337 aa).

7 residues coordinate [4Fe-4S] cluster: C81, C86, C92, C107, C111, C114, and S323. One can recognise a Radical SAM core domain in the interval F93–S312.

Belongs to the radical SAM superfamily. Lipoyl synthase family. It depends on [4Fe-4S] cluster as a cofactor.

It is found in the cytoplasm. It catalyses the reaction [[Fe-S] cluster scaffold protein carrying a second [4Fe-4S](2+) cluster] + N(6)-octanoyl-L-lysyl-[protein] + 2 oxidized [2Fe-2S]-[ferredoxin] + 2 S-adenosyl-L-methionine + 4 H(+) = [[Fe-S] cluster scaffold protein] + N(6)-[(R)-dihydrolipoyl]-L-lysyl-[protein] + 4 Fe(3+) + 2 hydrogen sulfide + 2 5'-deoxyadenosine + 2 L-methionine + 2 reduced [2Fe-2S]-[ferredoxin]. It functions in the pathway protein modification; protein lipoylation via endogenous pathway; protein N(6)-(lipoyl)lysine from octanoyl-[acyl-carrier-protein]: step 2/2. Functionally, catalyzes the radical-mediated insertion of two sulfur atoms into the C-6 and C-8 positions of the octanoyl moiety bound to the lipoyl domains of lipoate-dependent enzymes, thereby converting the octanoylated domains into lipoylated derivatives. The protein is Lipoyl synthase of Xanthomonas euvesicatoria pv. vesicatoria (strain 85-10) (Xanthomonas campestris pv. vesicatoria).